A 446-amino-acid chain; its full sequence is Peptide chain release factor 1, mitochondrial (446 aa).

Residues 1 to 62 (MSHHLCIWLF…LLNKSWSRGC (62 aa)) constitute a mitochondrion transit peptide. The interval 298–362 (PKDLRVDTFR…LRARLYQQII (65 aa)) is GGQ domain. The GGQ motif lies at 312 to 314 (GGQ). Q314 carries the N5-methylglutamine modification.

This sequence belongs to the prokaryotic/mitochondrial release factor family. Methylation of glutamine in the GGQ triplet by HEMK1 is conserved from bacteria to mammals.

It is found in the mitochondrion. Mitochondrial peptide chain release factor that directs the termination of translation in response to the peptide chain non-canonical stop codons AGG and AGA. Non-canonical termination codons AGG and AGA are found at the end of MT-CO1/COX1 and MT-ND6/ND6 open reading frames, respectively. Recognizes non-canonical stop codons via a network of interactions between the codon, MTRF1 and the ribosomal RNA (rRNA): in contrast to other translation release factors, which identify the codon in the A-site via direct interactions of amino acid side chains with the bases, MTRF1 repositions the first 2 bases of the stop codon to use an intricate network of interactions that includes residues of the release factor, the rRNA of the small ribosomal subunit, as well as neighboring bases of the mRNA. This chain is Peptide chain release factor 1, mitochondrial, found in Mus musculus (Mouse).